Consider the following 744-residue polypeptide: Tripartite motif-containing protein 2 (744 aa).

The residue at position 10 (Ser10) is a Phosphoserine. An RING-type zinc finger spans residues 23 to 64; sequence CSICLERYKNPKVLPCLHTFCERCLQNYIPAHSLTLSCPVCR. The segment at 113-154 adopts a B box-type zinc-finger fold; that stretch reads GKPLSCPNHDGNVMEFYCQSCETAMCRECTEGEHAEHPTVPL. Zn(2+)-binding residues include Cys118, His121, Cys141, and His146. Residues 320–421 form a Filamin repeat; it reads TTNAVASETV…IRGSPFKLKV (102 aa). Residue Thr371 is modified to Phosphothreonine. A phosphoserine mark is found at Ser375, Ser424, and Ser428. The interval 432 to 462 is disordered; it reads EGVKRRVKSPGSGHVKQKAVKRPASMYSTGK. NHL repeat units lie at residues 473–516, 520–563, 564–605, 609–652, 656–699, and 700–743; these read IFRV…FSND, KSRF…FSSD, GKFK…FQPN, VTRF…FNQE, MLKF…FDGS, and GSFL…YRYL.

It belongs to the TRIM/RBCC family. Forms homooligomers. Interacts with TRIM3; this interaction reduces TRIM2 activity. Interacts with myosin V; myosin V may not be a substrate for ubiquitination. Interacts with NEFL. Interacts with phosphorylated BCL2L11. Interacts with SIRPA. RING-type zinc finger-dependent and UBE2D1-dependent autoubiquitination.

It is found in the cytoplasm. It carries out the reaction S-ubiquitinyl-[E2 ubiquitin-conjugating enzyme]-L-cysteine + [acceptor protein]-L-lysine = [E2 ubiquitin-conjugating enzyme]-L-cysteine + N(6)-ubiquitinyl-[acceptor protein]-L-lysine.. The protein operates within protein modification; protein ubiquitination. In terms of biological role, UBE2D1-dependent E3 ubiquitin-protein ligase that mediates the ubiquitination of NEFL and of phosphorylated BCL2L11. Plays a neuroprotective function. May play a role in neuronal rapid ischemic tolerance. Plays a role in antiviral immunity and limits New World arenavirus infection independently of its ubiquitin ligase activity. The chain is Tripartite motif-containing protein 2 (TRIM2) from Homo sapiens (Human).